The following is a 317-amino-acid chain: Carbonic anhydrase 6 (317 aa).

Residues 1–17 (MRALVSVVSLFFLGIQA) form the signal peptide. Residues 19 to 277 (SDWSYSGDDG…NNHRVVEANF (259 aa)) enclose the Alpha-carbonic anhydrase domain. Cys-41 and Cys-223 form a disulfide bridge. His-84 functions as the Proton donor/acceptor in the catalytic mechanism. Zn(2+) contacts are provided by His-110, His-112, and His-137. 219-220 (TT) contacts substrate. Asn-255 is a glycosylation site (N-linked (GlcNAc...) asparagine).

The protein belongs to the alpha-carbonic anhydrase family. Zn(2+) is required as a cofactor. In terms of tissue distribution, major constituent of saliva.

It is found in the secreted. It catalyses the reaction hydrogencarbonate + H(+) = CO2 + H2O. In terms of biological role, reversible hydration of carbon dioxide. Its role in saliva is unknown. The polypeptide is Carbonic anhydrase 6 (Ca6) (Mus musculus (Mouse)).